Reading from the N-terminus, the 952-residue chain is MSFALGQRWISDTESDLGLGTVVAVDDRTVSLLFAASEENRLYAKHDAPVTRVMFNKGDTIESHEGWSLDVEDVIEEGGLLTYIGTRVDTDEANVVLRETLLSHQIRFNKPQDKLFAGQIDRMDRFALRFRALQNQYEQHKSPMRGLCGMRAGLIPHQLFIAHEVGRRYAPRVLLADEVGLGKTIEAGMIIHQQVLSGRAERVLIVVPETLQHQWLVEMMRRFNLHFSIFDEERCVEAYADSENPFDTAQFVLCSLDFIRKSKRRFEQVVEADWDLLVVDEAHHLEWNQTKPSREYQVIEAIAEETPGVLLLTATPEQLGHESHFARLRLLDPDRFYDYDAFVEEERQYQPVADAVTALMSGEKLSNDAKNRITELLSEQDVEPLFRIIESSAAEDEQAQARQELVDNLMDRHGTGRVLFRNTRAAIKGFPQRNLNLMPMPLPSQYATSMRVATMMGGRMTDEARAMKMLYPEEIFQEFEGDSATWWQFDPRVNWLLELLKENRNEKVLIIASRASTALQLEQALREREGIRGTVFHEGMSIIERDKAAAYFAQEEGGAQVLICSEIGSEGRNFQFANQLVMFDLPFNPDLLEQRIGRLDRIGQKRDIEIHVPYLQGTSQELLARWFDEGLNAFGETCPTGRAVYDKFADAIIAILATGKSDGLESLIEESATLNKALKSQLEQGRDRLLEVHSNGGDKAKEIAEQIAATDGDTNLVNFALNLFDTIGLNQDDKGENAIVVTPAENMLVSSYPGLPYEGCTITFDRETALSREDMNLISWEHPMIQGGIDLVLTEGVGATAVSLLKNKALPAGTLLLELVYVVDAQAPKQSGIARFLPKTPIRIMMDGKGNDLSAQVEFESFNRQLSPVNRHMASKLVNSVQKEIHGLIDKAEISMEERLESVRTDAEKEMKAALNSELERLQALKAVNPNIRDEELTQIGNSNERTIWLYW.

The Helicase ATP-binding domain occupies 164 to 334 (EVGRRYAPRV…FARLRLLDPD (171 aa)). An ATP-binding site is contributed by 177–184 (DEVGLGKT). The DEAH box motif lies at 280–283 (DEAH). The 177-residue stretch at 492–668 (RVNWLLELLK…GKSDGLESLI (177 aa)) folds into the Helicase C-terminal domain.

It belongs to the SNF2/RAD54 helicase family. RapA subfamily. As to quaternary structure, interacts with the RNAP. Has a higher affinity for the core RNAP than for the holoenzyme. Its ATPase activity is stimulated by binding to RNAP.

Functionally, transcription regulator that activates transcription by stimulating RNA polymerase (RNAP) recycling in case of stress conditions such as supercoiled DNA or high salt concentrations. Probably acts by releasing the RNAP, when it is trapped or immobilized on tightly supercoiled DNA. Does not activate transcription on linear DNA. Probably not involved in DNA repair. The protein is RNA polymerase-associated protein RapA of Aliivibrio fischeri (strain ATCC 700601 / ES114) (Vibrio fischeri).